Consider the following 265-residue polypeptide: Beta-lactamase OXA-48 (265 aa).

An N-terminal signal peptide occupies residues 1–22 (MRVLALSAVFLVASIIGMPAVA). Catalysis depends on S70, which acts as the Acyl-ester intermediate. The a beta-lactam site is built by S70, K73, S118, and R250. K73 carries the post-translational modification N6-carboxylysine.

This sequence belongs to the class-D beta-lactamase family. Monomer. Dimer. Post-translationally, carboxylated on the epsilon-amino group of a lysine, with the resulting carbamate functional group serving as a general base. Probably N-carboxylated at Lys-73 at neutral pH in vivo and undergoes complete N-decarboxylation, at pH 4.1, in vitro.

It catalyses the reaction a beta-lactam + H2O = a substituted beta-amino acid. Inhibited by avibactam, related diazabicyclooctane (DBO) derivatives and by bicyclic boronic acids, via a covalent binding to Ser-70. Inhibited by chloride, bromide and iodide ions. Not inhibited by the beta-lactamase-blocking agents, clavulanic acid or tazobactam. Class D beta-lactamase which confers resistance to the beta-lactam antibiotics, including amoxicillin, and moderate resistance to cephalosporins and carbapenems such as cephalothin and imipenem; in the DH10B strain of E.coli. Acts via hydrolysis of the beta-lactam ring. Has oxacillin-, cephalothin- and imipenem-hydrolyzing activities. This is Beta-lactamase OXA-48 from Klebsiella pneumoniae.